Consider the following 427-residue polypeptide: 3-isopropylmalate dehydratase large subunit (427 aa).

Residues C308, C368, and C371 each contribute to the [4Fe-4S] cluster site.

The protein belongs to the aconitase/IPM isomerase family. LeuC type 2 subfamily. Heterodimer of LeuC and LeuD. Requires [4Fe-4S] cluster as cofactor.

It catalyses the reaction (2R,3S)-3-isopropylmalate = (2S)-2-isopropylmalate. It participates in amino-acid biosynthesis; L-leucine biosynthesis; L-leucine from 3-methyl-2-oxobutanoate: step 2/4. Functionally, catalyzes the isomerization between 2-isopropylmalate and 3-isopropylmalate, via the formation of 2-isopropylmaleate. The sequence is that of 3-isopropylmalate dehydratase large subunit from Geobacter sulfurreducens (strain ATCC 51573 / DSM 12127 / PCA).